The following is a 537-amino-acid chain: Probable glucomannan 4-beta-mannosyltransferase 15 (537 aa).

The chain crosses the membrane as a helical span at residues 50–70; sequence FIVPLFKCIVVMCLIISLLVF. Aspartate 150 is a catalytic residue. Positions 209 and 211 each coordinate substrate. The active site involves aspartate 303. 4 helical membrane-spanning segments follow: residues 382–402, 418–438, 494–514, and 515–535; these read IVVH…SVFL, VITL…IFWV, EMMM…FGNA, and FLYL…VGFV.

Belongs to the glycosyltransferase 2 family. Plant cellulose synthase-like A subfamily.

It localises to the golgi apparatus membrane. The catalysed reaction is GDP-mannose + (glucomannan)n = GDP + (glucomannan)n+1.. Probable mannan synthase which consists of a 4-beta-mannosyltransferase activity on mannan using GDP-mannose. The beta-1,4-mannan product is the backbone for galactomannan synthesis by galactomannan galactosyltransferase. Galactomannan is a noncellulosic polysaccharides of plant cell wall. The sequence is that of Probable glucomannan 4-beta-mannosyltransferase 15 from Arabidopsis thaliana (Mouse-ear cress).